Consider the following 341-residue polypeptide: DNA-directed RNA polymerase subunit alpha (341 aa).

Residues 1–237 form an alpha N-terminal domain (alpha-NTD) region; sequence MLSLSKNWNA…EQLQLFISFE (237 aa). Residues 247–341 are alpha C-terminal domain (alpha-CTD); sequence TDALPFSPYL…LSKRYEDSYN (95 aa).

It belongs to the RNA polymerase alpha chain family. As to quaternary structure, homodimer. The RNAP catalytic core consists of 2 alpha, 1 beta, 1 beta' and 1 omega subunit. When a sigma factor is associated with the core the holoenzyme is formed, which can initiate transcription.

It carries out the reaction RNA(n) + a ribonucleoside 5'-triphosphate = RNA(n+1) + diphosphate. Functionally, DNA-dependent RNA polymerase catalyzes the transcription of DNA into RNA using the four ribonucleoside triphosphates as substrates. The polypeptide is DNA-directed RNA polymerase subunit alpha (Rickettsia bellii (strain RML369-C)).